Reading from the N-terminus, the 95-residue chain is Secretoglobin family 2A member 2 (95 aa).

An N-terminal signal peptide occupies residues 1-18; it reads MKLVFLFLLVTIPICCYA. Residue Asn-35 is glycosylated (N-linked (GlcNAc...) asparagine).

This sequence belongs to the secretoglobin family. Lipophilin subfamily. As to quaternary structure, prostatein is composed of three different peptides called C1, C2 and C3. These form covalent C1:C3 (F) and C2:C3 (S) heterodimers whose non-covalent association forms tetrameric (C1:C3/C3:C2) prostatein molecules. In terms of tissue distribution, highly expressed in ventral prostate.

It localises to the secreted. Part of prostatein which is the major secretory glycoprotein of ventral prostate gland. Steroid-binding protein; can bind non-polar steroids, cholesterol and a group of small proline-rich peptides. The sequence is that of Secretoglobin family 2A member 2 (Scgb2a2) from Rattus norvegicus (Rat).